The following is a 152-amino-acid chain: tRNA-specific adenosine deaminase (152 aa).

The CMP/dCMP-type deaminase domain maps to 2 to 111; the sequence is AERTHFMELA…AQDPKGGAVE (110 aa). A Zn(2+)-binding site is contributed by H53. The active-site Proton donor is E55. Residues C83 and C86 each contribute to the Zn(2+) site.

This sequence belongs to the cytidine and deoxycytidylate deaminase family. As to quaternary structure, homodimer. Zn(2+) is required as a cofactor.

The catalysed reaction is adenosine(34) in tRNA + H2O + H(+) = inosine(34) in tRNA + NH4(+). Its function is as follows. Catalyzes the deamination of adenosine to inosine at the wobble position 34 of tRNA(Arg2). The sequence is that of tRNA-specific adenosine deaminase from Agrobacterium fabrum (strain C58 / ATCC 33970) (Agrobacterium tumefaciens (strain C58)).